The primary structure comprises 405 residues: Tryptophan synthase beta chain (405 aa).

An N6-(pyridoxal phosphate)lysine modification is found at K98.

This sequence belongs to the TrpB family. In terms of assembly, tetramer of two alpha and two beta chains. Pyridoxal 5'-phosphate serves as cofactor.

The catalysed reaction is (1S,2R)-1-C-(indol-3-yl)glycerol 3-phosphate + L-serine = D-glyceraldehyde 3-phosphate + L-tryptophan + H2O. Its pathway is amino-acid biosynthesis; L-tryptophan biosynthesis; L-tryptophan from chorismate: step 5/5. Its function is as follows. The beta subunit is responsible for the synthesis of L-tryptophan from indole and L-serine. This Methylococcus capsulatus (strain ATCC 33009 / NCIMB 11132 / Bath) protein is Tryptophan synthase beta chain.